The chain runs to 146 residues: Lipoprotein signal peptidase (146 aa).

3 helical membrane passes run isoleucine 6–leucine 26, methionine 50–leucine 70, and tyrosine 82–alanine 104. Catalysis depends on residues aspartate 108 and aspartate 125. A helical membrane pass occupies residues phenylalanine 123–proline 143.

Belongs to the peptidase A8 family.

It localises to the cell inner membrane. The enzyme catalyses Release of signal peptides from bacterial membrane prolipoproteins. Hydrolyzes -Xaa-Yaa-Zaa-|-(S,diacylglyceryl)Cys-, in which Xaa is hydrophobic (preferably Leu), and Yaa (Ala or Ser) and Zaa (Gly or Ala) have small, neutral side chains.. It functions in the pathway protein modification; lipoprotein biosynthesis (signal peptide cleavage). In terms of biological role, this protein specifically catalyzes the removal of signal peptides from prolipoproteins. The sequence is that of Lipoprotein signal peptidase from Sulfurovum sp. (strain NBC37-1).